A 311-amino-acid polypeptide reads, in one-letter code: Putative HTH-type transcriptional regulatory protein MTH_967 (311 aa).

An HTH cro/C1-type domain is found at 134-192 (LREVREEYNLSLKDLADLAHVSRKTIYKYENGLARASAETAMILEEILNIRITLSIDIF). Positions 145 to 164 (LKDLADLAHVSRKTIYKYEN) form a DNA-binding region, H-T-H motif.

In Methanothermobacter thermautotrophicus (strain ATCC 29096 / DSM 1053 / JCM 10044 / NBRC 100330 / Delta H) (Methanobacterium thermoautotrophicum), this protein is Putative HTH-type transcriptional regulatory protein MTH_967.